A 216-amino-acid chain; its full sequence is 3-keto-L-gulonate-6-phosphate decarboxylase UlaD (216 aa).

A substrate-binding site is contributed by Asp-11. Residues Glu-33 and Asp-62 each contribute to the Mg(2+) site. Arg-192 contributes to the substrate binding site.

The protein belongs to the HPS/KGPDC family. KGPDC subfamily. In terms of assembly, homodimer. Mg(2+) is required as a cofactor.

It catalyses the reaction 3-dehydro-L-gulonate 6-phosphate + H(+) = L-xylulose 5-phosphate + CO2. It functions in the pathway cofactor degradation; L-ascorbate degradation; D-xylulose 5-phosphate from L-ascorbate: step 2/4. Catalyzes the decarboxylation of 3-keto-L-gulonate-6-P into L-xylulose-5-P. Is involved in the anaerobic L-ascorbate utilization. The sequence is that of 3-keto-L-gulonate-6-phosphate decarboxylase UlaD from Escherichia coli O17:K52:H18 (strain UMN026 / ExPEC).